A 408-amino-acid polypeptide reads, in one-letter code: Arginine biosynthesis bifunctional protein ArgJ 1 (408 aa).

Thr-154, Lys-180, Thr-191, Glu-277, Asn-403, and Ser-408 together coordinate substrate. Thr-191 (nucleophile) is an active-site residue.

It belongs to the ArgJ family. In terms of assembly, heterotetramer of two alpha and two beta chains.

It localises to the cytoplasm. The catalysed reaction is N(2)-acetyl-L-ornithine + L-glutamate = N-acetyl-L-glutamate + L-ornithine. It carries out the reaction L-glutamate + acetyl-CoA = N-acetyl-L-glutamate + CoA + H(+). Its pathway is amino-acid biosynthesis; L-arginine biosynthesis; L-ornithine and N-acetyl-L-glutamate from L-glutamate and N(2)-acetyl-L-ornithine (cyclic): step 1/1. It functions in the pathway amino-acid biosynthesis; L-arginine biosynthesis; N(2)-acetyl-L-ornithine from L-glutamate: step 1/4. In terms of biological role, catalyzes two activities which are involved in the cyclic version of arginine biosynthesis: the synthesis of N-acetylglutamate from glutamate and acetyl-CoA as the acetyl donor, and of ornithine by transacetylation between N(2)-acetylornithine and glutamate. In Clostridium acetobutylicum (strain ATCC 824 / DSM 792 / JCM 1419 / IAM 19013 / LMG 5710 / NBRC 13948 / NRRL B-527 / VKM B-1787 / 2291 / W), this protein is Arginine biosynthesis bifunctional protein ArgJ 1.